We begin with the raw amino-acid sequence, 182 residues long: Probable nicotinate-nucleotide adenylyltransferase (182 aa).

Belongs to the NadD family.

It carries out the reaction nicotinate beta-D-ribonucleotide + ATP + H(+) = deamido-NAD(+) + diphosphate. The protein operates within cofactor biosynthesis; NAD(+) biosynthesis; deamido-NAD(+) from nicotinate D-ribonucleotide: step 1/1. In terms of biological role, catalyzes the reversible adenylation of nicotinate mononucleotide (NaMN) to nicotinic acid adenine dinucleotide (NaAD). The protein is Probable nicotinate-nucleotide adenylyltransferase of Sulfurimonas denitrificans (strain ATCC 33889 / DSM 1251) (Thiomicrospira denitrificans (strain ATCC 33889 / DSM 1251)).